We begin with the raw amino-acid sequence, 562 residues long: Restriction of telomere capping protein 5 (562 aa).

Positions 1–21 (MGQTPSVESQESKETKNEMPE) are disordered. The segment covering 10–21 (QESKETKNEMPE) has biased composition (basic and acidic residues). Residues 283 to 509 (KLMTYPLVAQ…IRDVEVWGCG (227 aa)) form the TLDc domain.

This sequence belongs to the RTC5 family.

Its subcellular location is the cytoplasm. In terms of biological role, may be involved in a process influencing telomere capping. In Vanderwaltozyma polyspora (strain ATCC 22028 / DSM 70294 / BCRC 21397 / CBS 2163 / NBRC 10782 / NRRL Y-8283 / UCD 57-17) (Kluyveromyces polysporus), this protein is Restriction of telomere capping protein 5 (RTC5).